A 201-amino-acid chain; its full sequence is FMN-dependent NADH:quinone oxidoreductase (201 aa).

FMN-binding positions include serine 9 and serine 16 to serine 18.

The protein belongs to the azoreductase type 1 family. As to quaternary structure, homodimer. FMN serves as cofactor.

The catalysed reaction is 2 a quinone + NADH + H(+) = 2 a 1,4-benzosemiquinone + NAD(+). It catalyses the reaction N,N-dimethyl-1,4-phenylenediamine + anthranilate + 2 NAD(+) = 2-(4-dimethylaminophenyl)diazenylbenzoate + 2 NADH + 2 H(+). Its function is as follows. Quinone reductase that provides resistance to thiol-specific stress caused by electrophilic quinones. Functionally, also exhibits azoreductase activity. Catalyzes the reductive cleavage of the azo bond in aromatic azo compounds to the corresponding amines. The protein is FMN-dependent NADH:quinone oxidoreductase of Mesomycoplasma hyopneumoniae (strain 7448) (Mycoplasma hyopneumoniae).